The chain runs to 273 residues: Urease accessory protein UreD (273 aa).

This sequence belongs to the UreD family. As to quaternary structure, ureD, UreF and UreG form a complex that acts as a GTP-hydrolysis-dependent molecular chaperone, activating the urease apoprotein by helping to assemble the nickel containing metallocenter of UreC. The UreE protein probably delivers the nickel.

Its subcellular location is the cytoplasm. Required for maturation of urease via the functional incorporation of the urease nickel metallocenter. The chain is Urease accessory protein UreD from Bacillus cereus (strain ATCC 10987 / NRS 248).